A 134-amino-acid polypeptide reads, in one-letter code: Fluoride-specific ion channel FluC 2 (134 aa).

The next 4 helical transmembrane spans lie at 10 to 30 (LSAE…GALL), 43 to 63 (LLVN…PAAP), 67 to 87 (LLVG…MVDA), and 100 to 120 (FGLI…GFWL). Gly75 and Thr78 together coordinate Na(+).

The protein belongs to the fluoride channel Fluc/FEX (TC 1.A.43) family.

The protein resides in the cell inner membrane. The enzyme catalyses fluoride(in) = fluoride(out). Na(+) is not transported, but it plays an essential structural role and its presence is essential for fluoride channel function. Functionally, fluoride-specific ion channel. Important for reducing fluoride concentration in the cell, thus reducing its toxicity. This is Fluoride-specific ion channel FluC 2 from Synechococcus sp. (strain CC9902).